The following is a 580-amino-acid chain: Transcription factor coe2-B (580 aa).

The interval 60–63 is interaction with DNA; that stretch reads RKSN. A C5-type zinc finger spans residues 148 to 167; it reads CRVLLTHEVMCSRCCEKKSC. Interaction with DNA regions lie at residues 194-201 and 233-236; these read NCLKTAGN and NNSK. One can recognise an IPT/TIG domain in the interval 259 to 341; it reads PCIKAISPSE…CKGAPGRFIY (83 aa). Residues 455–492 form a disordered region; it reads IRNTSSISPRGYSSSSTPQQSNYSTPSNSMNGYSNVPM. Positions 459 to 481 are enriched in low complexity; sequence SSISPRGYSSSSTPQQSNYSTPS. The segment covering 482–492 has biased composition (polar residues); sequence NSMNGYSNVPM.

The protein belongs to the COE family. In embryos, expressed in precursors of primary neurons. In adults, expressed at high levels in the brain, and at low levels in the somatic muscles, testis, and possibly the spleen.

Its subcellular location is the nucleus. May play a pivotal role in the transcriptional cascade that specifies primary neurons in embryos. Stabilizes the higher neural potential of selected progenitor cells that express neurog2/X-ngnr-1 by maintaining Delta-Notch signaling. Thus ensures the transition between neural competence and irreversible commitment to a neural fate. Also promotes neuronal differentiation by activating neurod1 expression, directly or indirectly. The protein is Transcription factor coe2-B of Xenopus laevis (African clawed frog).